The primary structure comprises 737 residues: SANT and BTB domain regulator of class switch recombination (737 aa).

In terms of domain architecture, SANT spans 21 to 59 (DMILYPLIGIPQTINWETVARLVPGLTPKECVKRFDELK). In terms of domain architecture, BTB spans 147-255 (MVIHVCDEAK…QCIQYCHKNM (109 aa)). Acidic residues predominate over residues 555–576 (SEEEEYTTGSEVTEDEVGDEEE). The disordered stretch occupies residues 555–618 (SEEEEYTTGS…TLEKSTSRDV (64 aa)). Residues 580-595 (KQRKKEKPKKFTKPPK) are compositionally biased toward basic residues. Over residues 604–615 (QKKEKTLEKSTS) the composition is skewed to basic and acidic residues.

Belongs to the KIAA1841 family. As to quaternary structure, homodimer. Interacts (via the BTB domain) with HDAC1 and NCOR2.

Functionally, negatively regulates class switch recombination or isotype switching in splenic B-cells. The protein is SANT and BTB domain regulator of class switch recombination of Rattus norvegicus (Rat).